A 455-amino-acid polypeptide reads, in one-letter code: GTPase Der (455 aa).

2 consecutive EngA-type G domains span residues Pro-4–Asp-169 and Ile-178–Arg-353. Residues Gly-10–Ser-17, Asp-57–Leu-61, Asn-120–Glu-123, Gly-184–Ser-191, Asp-231–Ile-235, and Asn-296–Asp-299 each bind GTP. Residues Arg-354–Gln-439 form the KH-like domain.

Belongs to the TRAFAC class TrmE-Era-EngA-EngB-Septin-like GTPase superfamily. EngA (Der) GTPase family. In terms of assembly, associates with the 50S ribosomal subunit.

GTPase that plays an essential role in the late steps of ribosome biogenesis. This Synechococcus sp. (strain CC9902) protein is GTPase Der.